Here is a 352-residue protein sequence, read N- to C-terminus: Glycoprotein integral membrane protein 1 (352 aa).

An N-terminal signal peptide occupies residues 1-25 (MASRCKIHLTVAYLLILCILASAQS). Residues 26–281 (KQMTTETVVL…KLRRFLSDSV (256 aa)) are Extracellular-facing. Residues asparagine 36, asparagine 44, asparagine 89, asparagine 109, asparagine 151, and asparagine 197 are each glycosylated (N-linked (GlcNAc...) asparagine). The segment at 206 to 245 (NSETTQEEIAAPGKLPETPLRMDPETLYESREEEERRSDS) is disordered. The segment covering 225 to 244 (LRMDPETLYESREEEERRSD) has biased composition (basic and acidic residues). A helical membrane pass occupies residues 282–302 (PLFFLVMWVVVVGVAGSAVVI). Over 303-352 (KILDLIFPSCEHRGFFHLNPETLMPDDEKVSLIDNMEGDMTEKSILLIEK) the chain is Cytoplasmic.

The protein localises to the membrane. The protein is Glycoprotein integral membrane protein 1 (ginm1) of Danio rerio (Zebrafish).